The primary structure comprises 312 residues: tRNA uridine(34) hydroxylase (312 aa).

Residues 145-235 form the Rhodanese domain; sequence ENKNSVLVDM…GIIKYVRDAR (91 aa). C199 serves as the catalytic Cysteine persulfide intermediate.

Belongs to the TrhO family.

The enzyme catalyses uridine(34) in tRNA + AH2 + O2 = 5-hydroxyuridine(34) in tRNA + A + H2O. In terms of biological role, catalyzes oxygen-dependent 5-hydroxyuridine (ho5U) modification at position 34 in tRNAs. This chain is tRNA uridine(34) hydroxylase, found in Buchnera aphidicola subsp. Baizongia pistaciae (strain Bp).